The primary structure comprises 416 residues: Gamma-glutamyl phosphate reductase (416 aa).

This sequence belongs to the gamma-glutamyl phosphate reductase family.

It is found in the cytoplasm. The enzyme catalyses L-glutamate 5-semialdehyde + phosphate + NADP(+) = L-glutamyl 5-phosphate + NADPH + H(+). The protein operates within amino-acid biosynthesis; L-proline biosynthesis; L-glutamate 5-semialdehyde from L-glutamate: step 2/2. Functionally, catalyzes the NADPH-dependent reduction of L-glutamate 5-phosphate into L-glutamate 5-semialdehyde and phosphate. The product spontaneously undergoes cyclization to form 1-pyrroline-5-carboxylate. This chain is Gamma-glutamyl phosphate reductase, found in Leptospira borgpetersenii serovar Hardjo-bovis (strain JB197).